The following is a 158-amino-acid chain: Cyclic pyranopterin monophosphate synthase (158 aa).

Residues 75 to 77 and 113 to 114 each bind substrate; these read LCH and ME. Residue aspartate 128 is part of the active site.

This sequence belongs to the MoaC family. In terms of assembly, homohexamer; trimer of dimers.

It carries out the reaction (8S)-3',8-cyclo-7,8-dihydroguanosine 5'-triphosphate = cyclic pyranopterin phosphate + diphosphate. Its pathway is cofactor biosynthesis; molybdopterin biosynthesis. Its function is as follows. Catalyzes the conversion of (8S)-3',8-cyclo-7,8-dihydroguanosine 5'-triphosphate to cyclic pyranopterin monophosphate (cPMP). In Actinobacillus pleuropneumoniae serotype 5b (strain L20), this protein is Cyclic pyranopterin monophosphate synthase.